The chain runs to 294 residues: Shikimate dehydrogenase (NADP(+)) (294 aa).

Residues 22-24 (SLS) and S69 contribute to the shikimate site. The active-site Proton acceptor is K73. Shikimate contacts are provided by N94 and D111. Residues 135–139 (GAGGA) and L236 contribute to the NADP(+) site. Shikimate is bound at residue Y238. G260 contacts NADP(+).

The protein belongs to the shikimate dehydrogenase family. In terms of assembly, homodimer.

The catalysed reaction is shikimate + NADP(+) = 3-dehydroshikimate + NADPH + H(+). Its pathway is metabolic intermediate biosynthesis; chorismate biosynthesis; chorismate from D-erythrose 4-phosphate and phosphoenolpyruvate: step 4/7. Functionally, involved in the biosynthesis of the chorismate, which leads to the biosynthesis of aromatic amino acids. Catalyzes the reversible NADPH linked reduction of 3-dehydroshikimate (DHSA) to yield shikimate (SA). The protein is Shikimate dehydrogenase (NADP(+)) of Streptococcus equi subsp. zooepidemicus (strain MGCS10565).